The following is a 111-amino-acid chain: MESTAKLSFARLSPRKTRLVVDMVRGKGIQNALNTLRFSPQPSAKLVSKLLSSAVANAEQKGVADVDRLYVKTIYVDGGTVLKRFVPRAMGRASKIRKPTSHICVVLAEKK.

The protein belongs to the universal ribosomal protein uL22 family. As to quaternary structure, part of the 50S ribosomal subunit.

In terms of biological role, this protein binds specifically to 23S rRNA; its binding is stimulated by other ribosomal proteins, e.g. L4, L17, and L20. It is important during the early stages of 50S assembly. It makes multiple contacts with different domains of the 23S rRNA in the assembled 50S subunit and ribosome. Functionally, the globular domain of the protein is located near the polypeptide exit tunnel on the outside of the subunit, while an extended beta-hairpin is found that lines the wall of the exit tunnel in the center of the 70S ribosome. The protein is Large ribosomal subunit protein uL22 of Geotalea daltonii (strain DSM 22248 / JCM 15807 / FRC-32) (Geobacter daltonii).